Consider the following 335-residue polypeptide: Hsp90 co-chaperone Cdc37-like 1 (335 aa).

Residues 1 to 11 (MEQPWPPPGPW) show a composition bias toward pro residues. Residues 1–42 (MEQPWPPPGPWSFPRTGGETEEESDLDVSPSSSHYSPVPDGG) form a disordered region. A self-association region spans residues 2–170 (EQPWPPPGPW…YEQKIRHFGM (169 aa)). The span at 27–40 (DVSPSSSHYSPVPD) shows a compositional bias: low complexity. Phosphoserine is present on residues S32 and S88. Residues 84-120 (HNSESLDQEHAKAQTAVSELRQREEEWRQKEEALVQR) adopt a coiled-coil conformation. Positions 147-276 (KTEEEDKSQS…SRVRLYAQSQ (130 aa)) are self-association and interaction with Hsp90. An interaction with Hsp70 region spans residues 266–335 (KSRVRLYAQS…EDDDRMMDTV (70 aa)). The segment at 277–335 (SLQPVTVQNHVPHSGVGCIGSLESLPQNPDSLQCCTPAPLCSVDSVVHKEDDDRMMDTV) is required for interaction with STIP1.

It belongs to the CDC37 family. Self-associates. Forms complexes with Hsp70 and Hsp90. Interacts with CDC37, FKBP4, PPID and STIP1.

The protein localises to the cytoplasm. Its function is as follows. Co-chaperone that binds to numerous proteins and promotes their interaction with Hsp70 and Hsp90. This Mus musculus (Mouse) protein is Hsp90 co-chaperone Cdc37-like 1 (Cdc37l1).